A 148-amino-acid polypeptide reads, in one-letter code: Large ribosomal subunit protein bL9 (148 aa).

This sequence belongs to the bacterial ribosomal protein bL9 family.

Its function is as follows. Binds to the 23S rRNA. The sequence is that of Large ribosomal subunit protein bL9 from Frankia casuarinae (strain DSM 45818 / CECT 9043 / HFP020203 / CcI3).